We begin with the raw amino-acid sequence, 271 residues long: 2,3,4,5-tetrahydropyridine-2,6-dicarboxylate N-succinyltransferase (271 aa).

Arg103 and Asp140 together coordinate substrate.

It belongs to the transferase hexapeptide repeat family. In terms of assembly, homotrimer.

Its subcellular location is the cytoplasm. The catalysed reaction is (S)-2,3,4,5-tetrahydrodipicolinate + succinyl-CoA + H2O = (S)-2-succinylamino-6-oxoheptanedioate + CoA. It functions in the pathway amino-acid biosynthesis; L-lysine biosynthesis via DAP pathway; LL-2,6-diaminopimelate from (S)-tetrahydrodipicolinate (succinylase route): step 1/3. This is 2,3,4,5-tetrahydropyridine-2,6-dicarboxylate N-succinyltransferase from Methylococcus capsulatus (strain ATCC 33009 / NCIMB 11132 / Bath).